Reading from the N-terminus, the 295-residue chain is uncharacterized protein (295 aa).

The protein belongs to the NAD(P)-dependent epimerase/dehydratase family.

This is an uncharacterized protein from Schizosaccharomyces pombe (strain 972 / ATCC 24843) (Fission yeast).